Here is a 395-residue protein sequence, read N- to C-terminus: 1-deoxy-D-xylulose 5-phosphate reductoisomerase (395 aa).

Residues threonine 15, glycine 16, serine 17, isoleucine 18, glycine 41, asparagine 43, and asparagine 126 each contribute to the NADPH site. Lysine 127 provides a ligand contact to 1-deoxy-D-xylulose 5-phosphate. Residue glutamate 128 participates in NADPH binding. Position 152 (aspartate 152) interacts with Mn(2+). Serine 153, glutamate 154, serine 178, and histidine 201 together coordinate 1-deoxy-D-xylulose 5-phosphate. Glutamate 154 contributes to the Mn(2+) binding site. Position 207 (glycine 207) interacts with NADPH. Positions 214, 219, 220, and 223 each coordinate 1-deoxy-D-xylulose 5-phosphate. Glutamate 223 contacts Mn(2+).

It belongs to the DXR family. Mg(2+) serves as cofactor. The cofactor is Mn(2+).

The catalysed reaction is 2-C-methyl-D-erythritol 4-phosphate + NADP(+) = 1-deoxy-D-xylulose 5-phosphate + NADPH + H(+). Its pathway is isoprenoid biosynthesis; isopentenyl diphosphate biosynthesis via DXP pathway; isopentenyl diphosphate from 1-deoxy-D-xylulose 5-phosphate: step 1/6. Its function is as follows. Catalyzes the NADPH-dependent rearrangement and reduction of 1-deoxy-D-xylulose-5-phosphate (DXP) to 2-C-methyl-D-erythritol 4-phosphate (MEP). The chain is 1-deoxy-D-xylulose 5-phosphate reductoisomerase from Ruegeria pomeroyi (strain ATCC 700808 / DSM 15171 / DSS-3) (Silicibacter pomeroyi).